Here is a 172-residue protein sequence, read N- to C-terminus: MKQQLLLLEDVDGLGRSGDIVTARPGYVRNYLMPQKKAVIAGAGTLRLQAKLKEERLLRAAEDRAESEKLAEALRDVILEFQVRVDPDNNMYGSVTISDIIDEAAKKNIILTRKNFPHSHYAIKNLGKKSVPLKLKEDVTATLFVEVSSESSYVAVLNQQPTQEEPAAEESN.

Belongs to the bacterial ribosomal protein bL9 family.

Functionally, binds to the 23S rRNA. The chain is Large ribosomal subunit protein bL9 from Chlamydia caviae (strain ATCC VR-813 / DSM 19441 / 03DC25 / GPIC) (Chlamydophila caviae).